A 192-amino-acid polypeptide reads, in one-letter code: Adenylate kinase (192 aa).

ATP is bound at residue Gly10–Thr15. The interval Ser30–Val59 is NMP. Residues Thr31, Arg36, Ala57 to Val59, Gly85 to Arg88, and Gln92 contribute to the AMP site. The interval Lys126–Asp142 is LID. Arg127 lines the ATP pocket. Arg139 and Arg150 together coordinate AMP. Ala178 contacts ATP.

This sequence belongs to the adenylate kinase family. In terms of assembly, monomer.

It localises to the cytoplasm. It catalyses the reaction AMP + ATP = 2 ADP. The protein operates within purine metabolism; AMP biosynthesis via salvage pathway; AMP from ADP: step 1/1. Catalyzes the reversible transfer of the terminal phosphate group between ATP and AMP. Plays an important role in cellular energy homeostasis and in adenine nucleotide metabolism. This is Adenylate kinase from Bartonella bacilliformis (strain ATCC 35685 / KC583 / Herrer 020/F12,63).